The primary structure comprises 422 residues: Serine--tRNA ligase (422 aa).

L-serine is bound at residue 229–231; it reads TAE. 260–262 lines the ATP pocket; that stretch reads RKE. L-serine is bound at residue Glu-283. Position 347-350 (347-350) interacts with ATP; sequence EISS. Ser-383 lines the L-serine pocket.

The protein belongs to the class-II aminoacyl-tRNA synthetase family. Type-1 seryl-tRNA synthetase subfamily. In terms of assembly, homodimer. The tRNA molecule binds across the dimer.

The protein localises to the cytoplasm. The catalysed reaction is tRNA(Ser) + L-serine + ATP = L-seryl-tRNA(Ser) + AMP + diphosphate + H(+). The enzyme catalyses tRNA(Sec) + L-serine + ATP = L-seryl-tRNA(Sec) + AMP + diphosphate + H(+). It functions in the pathway aminoacyl-tRNA biosynthesis; selenocysteinyl-tRNA(Sec) biosynthesis; L-seryl-tRNA(Sec) from L-serine and tRNA(Sec): step 1/1. Its function is as follows. Catalyzes the attachment of serine to tRNA(Ser). Is also able to aminoacylate tRNA(Sec) with serine, to form the misacylated tRNA L-seryl-tRNA(Sec), which will be further converted into selenocysteinyl-tRNA(Sec). In Geotalea uraniireducens (strain Rf4) (Geobacter uraniireducens), this protein is Serine--tRNA ligase.